Consider the following 583-residue polypeptide: Complement factor I (583 aa).

The N-terminal stretch at 1–18 (MKLLHVFLLFLCFHLSFC) is a signal peptide. 16 disulfide bridges follow: C33-C255, C43-C54, C48-C59, C61-C93, C67-C86, C75-C106, C141-C181, C154-C214, C186-C196, C229-C247, C259-C271, C266-C284, C278-C293, C327-C453, C365-C381, and C373-C444. The Kazal-like domain occupies 55-108 (IEGTCICKLPYQCPKNGTTVCATNGRSFPTYCQQKSLECLRPGTKFLNNGTCTA). 4 N-linked (GlcNAc...) asparagine glycosylation sites follow: N70, N103, N173, and N177. One can recognise an SRCR domain in the interval 114-212 (VSLKHGNTDS…TMGYQDLADV (99 aa)). 2 consecutive LDL-receptor class A domains span residues 213–257 (VCYT…LCCK) and 258–294 (ACQGKSFHCKSGVCIPSQYRCNGEVDCITGEDEVGCE). Ca(2+) contacts are provided by K239, D242, I244, D246, D252, and E253. Residues Y276, N279, E281, D283, D289, and E290 each coordinate Ca(2+). The 235-residue stretch at 340–574 (IVGGKRAQLG…YFDWISYHVG (235 aa)) folds into the Peptidase S1 domain. Active-site charge relay system residues include H380 and D429. Residues N464 and N494 are each glycosylated (N-linked (GlcNAc...) asparagine). Disulfide bonds link C467/C531, C495/C510, and C521/C550. Catalysis depends on S525, which acts as the Charge relay system. N536 carries N-linked (GlcNAc...) asparagine glycosylation.

This sequence belongs to the peptidase S1 family. In terms of assembly, heterodimer of a light and heavy chains; disulfide-linked. The fully processed and mature protein circulates as a zymogen, and is allosterically activated by substrate-induced remodeling of the active site. Plasma.

It is found in the secreted. The protein localises to the extracellular space. It carries out the reaction Inactivates complement subcomponents C3b, iC3b and C4b by proteolytic cleavage.. Functionally, responsible for cleaving the alpha-chains of C4b and C3b in the presence of the cofactors C4-binding protein and factor H respectively. The protein is Complement factor I (CFI) of Pongo abelii (Sumatran orangutan).